The chain runs to 284 residues: Homeobox protein SIX1 (284 aa).

Positions 124 to 183 (GEETSYCFKEKSRGVLREWYAHNPYPSPREKRELAEATGLTTTQVSNWFKNRRQRDRAAE) form a DNA-binding region, homeobox. Residues 168-269 (VSNWFKNRRQ…LQTHQHQLQD (102 aa)) form a disordered region. Positions 179-190 (DRAAEAKERENT) are enriched in basic and acidic residues. Positions 242–269 (RSSNYSLPGLTASQPSHGLQTHQHQLQD) are enriched in polar residues.

This sequence belongs to the SIX/Sine oculis homeobox family. As to quaternary structure, interacts with DACH1. Interacts with EYA1. Interacts with EYA2. Interacts with CDH1. Interacts with TBX18. Interacts with CEBPA. Interacts with CEBPB. Interacts with EBF2. Phosphorylated during interphase; becomes hyperphosphorylated during mitosis. Hyperphosphorylation impairs binding to promoter elements. In terms of processing, ubiquitinated by the anaphase promoting complex (APC), leading to its proteasomal degradation. In terms of tissue distribution, specifically expressed in skeletal muscle.

It is found in the nucleus. The protein localises to the cytoplasm. In terms of biological role, transcription factor that is involved in the regulation of cell proliferation, apoptosis and embryonic development. Plays an important role in the development of several organs, including kidney, muscle and inner ear. Depending on context, functions as a transcriptional repressor or activator. Lacks an activation domain, and requires interaction with EYA family members for transcription activation. Mediates nuclear translocation of EYA1 and EYA2. Binds the 5'-TCA[AG][AG]TTNC-3' motif present in the MEF3 element in the MYOG promoter and CIDEA enhancer. Regulates the expression of numerous genes, including MYC, CCND1 and EZR. Acts as an activator of the IGFBP5 promoter, probably coactivated by EYA2. Repression of precursor cell proliferation in myoblasts is switched to activation through recruitment of EYA3 to the SIX1-DACH1 complex. During myogenesis, seems to act together with EYA2 and DACH2. Regulates the expression of CCNA1. Promotes brown adipocyte differentiation. In Homo sapiens (Human), this protein is Homeobox protein SIX1 (SIX1).